The sequence spans 568 residues: Periplasmic trehalase (568 aa).

Positions methionine 1–alanine 39 are cleaved as a signal peptide. Residues arginine 169, tryptophan 176–aspartate 177, asparagine 213, arginine 222–glutamine 224, arginine 294–glutamate 296, and glycine 327 each bind substrate. Residues aspartate 329 and glutamate 511 each act as proton donor/acceptor in the active site. Glutamate 526 contacts substrate.

It belongs to the glycosyl hydrolase 37 family.

The protein resides in the periplasm. The catalysed reaction is alpha,alpha-trehalose + H2O = alpha-D-glucose + beta-D-glucose. Provides the cells with the ability to utilize trehalose at high osmolarity by splitting it into glucose molecules that can subsequently be taken up by the phosphotransferase-mediated uptake system. This is Periplasmic trehalase from Xanthomonas axonopodis pv. citri (strain 306).